Consider the following 176-residue polypeptide: Protein singles bar (176 aa).

Transmembrane regions (helical) follow at residues Leu-13 to Ile-35, Phe-71 to Phe-91, Leu-111 to Leu-131, and Gly-140 to Leu-160. The region spanning Phe-30–Arg-173 is the MARVEL domain.

Its subcellular location is the membrane. Functionally, essential for myoblast fusion in developing embryos and pupae, and consequently is essential for muscle formation in adults. Required for progression past the pre-fusion complex stage of myoblast fusion. The polypeptide is Protein singles bar (Drosophila melanogaster (Fruit fly)).